The sequence spans 126 residues: UPF0231 protein VC0395_A0134/VC395_0622 (126 aa).

Belongs to the UPF0231 family.

In Vibrio cholerae serotype O1 (strain ATCC 39541 / Classical Ogawa 395 / O395), this protein is UPF0231 protein VC0395_A0134/VC395_0622.